Reading from the N-terminus, the 290-residue chain is Secreted chorismate mutase (290 aa).

Residues methionine 1–alanine 21 form the signal peptide. Residues valine 117–arginine 140 form a KWL1-binding extensive loop region (ELR) region. N-linked (GlcNAc...) asparagine glycosylation is found at asparagine 159 and asparagine 208.

In terms of assembly, homodimer. Forms a heterodimer with the host cytosolic chorismate mutase CM2. Interacts with the host kiwellin KWL1 which acts as a defense protein that protects maize from infection.

It is found in the secreted. The protein resides in the host cytoplasm. It localises to the host cytosol. It catalyses the reaction chorismate = prephenate. With respect to regulation, contrary to classical chorismate mutases, CMU1 is not subject to allosteric regulation by tryptophan and tyrosine. Activity is decreased in a non-competitive and allosteric manner by the binding of the host defense kiwellin KWL1 which probably blocks substrate access to the active site of CMU1. In terms of biological role, secreted chorismate mutase that is one component of a cocktail of effectors shaping the host metabolome and acting as virulence factors. The enzyme is taken up by plant cells, can spread to neighboring cells where it affects the biosynthesis of the plant immune signal salicylic acid by channelling chorismate into the phenylpropanoid pathway. Interferes with the activity of host cytosolic chorismate mutase CM2 through heterodimerization. This is Secreted chorismate mutase (CMU1) from Mycosarcoma maydis (Corn smut fungus).